The chain runs to 405 residues: Prostaglandin E2 receptor EP1 subtype (405 aa).

Over 1 to 39 (MSPCGLNLSLADEAATCATPRLPNTSVVLPTGDNGTSPA) the chain is Extracellular. Residues N7, N24, and N34 are each glycosylated (N-linked (GlcNAc...) asparagine). The chain crosses the membrane as a helical span at residues 40-62 (LPIFSMTLGAVSNVLALALLAQV). Residues 63–80 (AGRMRRRRSAATFLLFVA) lie on the Cytoplasmic side of the membrane. The chain crosses the membrane as a helical span at residues 81–99 (SLLAIDLAGHVIPGALVLR). The Extracellular portion of the chain corresponds to 100–113 (LYTAGRAPAGGACH). The cysteines at positions 112 and 190 are disulfide-linked. A helical transmembrane segment spans residues 114-135 (FLGGCMVFFGLCPLLLGCGMAV). The Cytoplasmic portion of the chain corresponds to 136 to 157 (ERCVGVTQPLIHAARVSVARAR). Residues 158 to 179 (LALAVLAAMALAVALLPLVHVG) traverse the membrane as a helical segment. The Extracellular portion of the chain corresponds to 180–202 (RYELQYPGTWCFISLGPRGGWRQ). The chain crosses the membrane as a helical span at residues 203-228 (ALLAGLFAGLGLAALLAALVCNTLSG). Over 229–301 (LALLRARWRR…HAHDVEMVGQ (73 aa)) the chain is Cytoplasmic. A disordered region spans residues 243 to 287 (RFRKTAGPDDRRRWGSRGPRLASASSASSITSATATLRSSRGGGS). Residues 262–282 (RLASASSASSITSATATLRSS) show a composition bias toward low complexity. Residues 302-323 (LVGIMVVSCICWSPLLVLVVLA) form a helical membrane-spanning segment. The Extracellular segment spans residues 324–337 (IGGWNSNSLQRPLF). The chain crosses the membrane as a helical span at residues 338–357 (LAVRLASWNQILDPWVYILL). Residues 358-405 (RQAMLRQLLRLLPLRVSAKGGPTELGLTKSAWEASSLRSSRHSGFSHL) lie on the Cytoplasmic side of the membrane.

This sequence belongs to the G-protein coupled receptor 1 family. Post-translationally, phosphorylated. In terms of tissue distribution, abundant in kidney and in a lesser amount in lung.

The protein localises to the cell membrane. Functionally, receptor for prostaglandin E2 (PGE2). The activity of this receptor is mediated by G(q) proteins which activate a phosphatidylinositol-calcium second messenger system. May play a role as an important modulator of renal function. Implicated the smooth muscle contractile response to PGE2 in various tissues. The chain is Prostaglandin E2 receptor EP1 subtype (Ptger1) from Mus musculus (Mouse).